The primary structure comprises 115 residues: T cell receptor beta variable 7-4 (115 aa).

A signal peptide spans M1–A21. The region spanning G22–L115 is the Ig-like domain. C42 and C111 are oxidised to a cystine. The segment at Y67–K97 is disordered.

Alpha-beta TR is a heterodimer composed of an alpha and beta chain; disulfide-linked. The alpha-beta TR is associated with the transmembrane signaling CD3 coreceptor proteins to form the TR-CD3 (TcR or TCR). The assembly of alpha-beta TR heterodimers with CD3 occurs in the endoplasmic reticulum where a single alpha-beta TR heterodimer associates with one CD3D-CD3E heterodimer, one CD3G-CD3E heterodimer and one CD247 homodimer forming a stable octameric structure. CD3D-CD3E and CD3G-CD3E heterodimers preferentially associate with TR alpha and TR beta chains, respectively. The association of the CD247 homodimer is the last step of TcR assembly in the endoplasmic reticulum and is required for transport to the cell surface.

The protein localises to the cell membrane. Its function is as follows. V region of the variable domain of T cell receptor (TR) beta chain that participates in the antigen recognition. Alpha-beta T cell receptors are antigen specific receptors which are essential to the immune response and are present on the cell surface of T lymphocytes. Recognize peptide-major histocompatibility (MH) (pMH) complexes that are displayed by antigen presenting cells (APC), a prerequisite for efficient T cell adaptive immunity against pathogens. Binding of alpha-beta TR to pMH complex initiates TR-CD3 clustering on the cell surface and intracellular activation of LCK that phosphorylates the ITAM motifs of CD3G, CD3D, CD3E and CD247 enabling the recruitment of ZAP70. In turn ZAP70 phosphorylates LAT, which recruits numerous signaling molecules to form the LAT signalosome. The LAT signalosome propagates signal branching to three major signaling pathways, the calcium, the mitogen-activated protein kinase (MAPK) kinase and the nuclear factor NF-kappa-B (NF-kB) pathways, leading to the mobilization of transcription factors that are critical for gene expression and essential for T cell growth and differentiation. The T cell repertoire is generated in the thymus, by V-(D)-J rearrangement. This repertoire is then shaped by intrathymic selection events to generate a peripheral T cell pool of self-MH restricted, non-autoaggressive T cells. Post-thymic interaction of alpha-beta TR with the pMH complexes shapes TR structural and functional avidity. The polypeptide is T cell receptor beta variable 7-4 (Homo sapiens (Human)).